A 538-amino-acid chain; its full sequence is DALR anticodon-binding domain-containing protein 3 (538 aa).

As to quaternary structure, part of a complex containing tRNA(Arg) and METTL2. Interacts with tRNA(Arg)(CCU) and tRNA(Arg)(UCU). Interacts with METTL2.

In terms of biological role, involved in tRNA methylation. Facilitates the recognition and targeting of tRNA(Arg)(CCU) and tRNA(Arg)(UCU) substrates for N(3)-methylcytidine modification by METTL2. This chain is DALR anticodon-binding domain-containing protein 3 (Dalrd3), found in Rattus norvegicus (Rat).